Consider the following 142-residue polypeptide: MRHYETMFILKPTLVEEEIKSKIEFYREVITKHHGVIETSLDMGMRNLAYEIKKHKRGYYYVAYFKAEPSMIVELERLYRINEDVLRFIVIKYESKKEVEAWHALVDRANKKPSHAKEKHEKTEHTHSHHAEEAESVGSHSE.

Residues 110–133 (NKKPSHAKEKHEKTEHTHSHHAEE) show a composition bias toward basic and acidic residues. Residues 110–142 (NKKPSHAKEKHEKTEHTHSHHAEEAESVGSHSE) form a disordered region.

The protein belongs to the bacterial ribosomal protein bS6 family.

In terms of biological role, binds together with bS18 to 16S ribosomal RNA. This Helicobacter pylori (strain P12) protein is Small ribosomal subunit protein bS6.